Reading from the N-terminus, the 1026-residue chain is MAQGAMRFCSEGDCAISPPRCPRRWLPEGPVPQSPPASMYGSTGSLLRRVAGPGPRSRELGRVTAPCTPLRGPPSPRIAPSPWAPSSPTGQPPPGARSSVVIFRFVEKASVRPLNGLPAPGGLSRSWDLGGVSPPRPTPALGPGSHQKLRLEASTSDPLPAGGGSARPGTQGLLQGPPTQPQVGADGLYSSLPNGLGGPSEHLATLFRGPADTGLLNQGDIWSSPREVSSHAQRIARAKWEFFYGSLDPPSSGAKPPEQAPPSPPGVGSGQGSGVAVGRAAKYSETDLDTVPLRCYRETDIDEVLTEREEADSAIESQPSSEGLPGTARPPAPRPGPCLGPHPSLGSGNEDEDEAGGEEDVDDEVFEASEGARPGTRMPHSGPLKSPLPFLPGTSPSADGPDSFSCVFEAILESHRAKGTSYTSLASLEALASPGPTQSPFFTFELPPQPPAPRPDPPAPAPLAPLEPDSGTSSAADGPWTQRGEEEEAEAGAKQTPGRDPPSPCHSEDSFGLGAAPLGSEPPLNQLVSDSDSELDSTERLALGSTDTLSNGQKADLEAAQRLAKRLYRLDGFRKADVARHLGKNNDFSKLVAGEYLKFFVFTGMTLDQALRVFLKELALMGETQERERVLAHFSQRYFQCNPGALSSEDGAHTLTCALMLLNTDLHGHNIAETHDLRRLHRYLEGLNEGGDFPRELLKALYSSIKNEKLQWAIDEEELRRSLSELADPNPKVIKRVSGGSGSGSSPFLDLTPEPGAAVYKHGALVRKVHADPDCRKTPRGKRGWKNFHGILKGMILYLQKEEYQPGKALSEAELKNAISIHHALATRASDYSKRPHVFYLRTADWRVFLFQAPSLEQMQSWITRINVVAAMFSAPPFPAAVSSQKKFSRPLLPSAATRLSQEEQVRTHEAKLKAMASELREHRATQLTKKARGKEAEEQRQKEAYLEFEKSRYGTYAALLRVKLKAGSEELDAVEAAVAQAGGTEDGLPPPHSSPSLPANTSSQPRAQCSDSEARAGAGSGRWKP.

4 disordered regions span residues 25–97 (WLPE…PGAR), 126–196 (SWDL…PNGL), 246–403 (SLDP…GPDS), and 436–538 (PTQS…LDST). Residues 71–95 (RGPPSPRIAPSPWAPSSPTGQPPPG) are compositionally biased toward pro residues. S126 and S156 each carry phosphoserine. Low complexity predominate over residues 168–184 (PGTQGLLQGPPTQPQVG). Residues 300 to 313 (DIDEVLTEREEADS) show a composition bias toward acidic residues. A compositionally biased stretch (pro residues) spans 328–340 (ARPPAPRPGPCLG). A compositionally biased stretch (acidic residues) spans 349–367 (NEDEDEAGGEEDVDDEVFE). Positions 447–465 (PPQPPAPRPDPPAPAPLAP) are enriched in pro residues. The SEC7 domain occupies 514 to 708 (GAAPLGSEPP…KALYSSIKNE (195 aa)). Phosphoserine is present on S722. Positions 758–871 (AVYKHGALVR…WITRINVVAA (114 aa)) constitute a PH domain. Positions 900–926 (LSQEEQVRTHEAKLKAMASELREHRAT) form a coiled coil. Disordered regions lie at residues 924–943 (RATQ…QRQK) and 978–1026 (AVAQ…RWKP). Over residues 934-943 (GKEAEEQRQK) the composition is skewed to basic and acidic residues. Residues 1000 to 1012 (ANTSSQPRAQCSD) show a composition bias toward polar residues.

The protein belongs to the PSD family. Interacts with ACTN1.

It localises to the cell membrane. The protein resides in the cell projection. It is found in the ruffle membrane. The protein localises to the cleavage furrow. Functionally, guanine nucleotide exchange factor for ARF6. Induces cytoskeletal remodeling. The chain is PH and SEC7 domain-containing protein 1 (PSD) from Bos taurus (Bovine).